The sequence spans 110 residues: Protein mistic (110 aa).

Residues 1 to 7 (MFCTFFE) lie on the Cytoplasmic side of the membrane. A helical membrane pass occupies residues 8-22 (KHHRKWDILLEKSTG). Residues 23-31 (VMEAMKVTS) are Extracellular-facing. The chain crosses the membrane as a helical span at residues 32–55 (EEKEQLSTAIDRMNEGLDAFIQLY). Topologically, residues 56–66 (NESEIDEPLIQ) are cytoplasmic. The helical transmembrane segment at 67–81 (LDDDTAELMKQARDM) threads the bilayer. The Extracellular segment spans residues 82–88 (YGQEKLN). A helical transmembrane segment spans residues 89–102 (EKLNTIIKQILSIS). The Cytoplasmic portion of the chain corresponds to 103-110 (VSEEGEKE).

In terms of assembly, monomer.

The protein localises to the cell membrane. Functionally, chaperone that facilitates the production and integration of integral membrane proteins into the bacterial lipid bilayer. The protein is Protein mistic (mstX) of Bacillus subtilis (strain 168).